Consider the following 559-residue polypeptide: Glycerol kinase (559 aa).

Thr-20 provides a ligand contact to ADP. ATP is bound by residues Thr-20, Ser-21, and Ser-22. Thr-20 contacts sn-glycerol 3-phosphate. Position 24 (Arg-24) interacts with ADP. The sn-glycerol 3-phosphate site is built by Arg-94, Glu-95, and Tyr-148. Residues Arg-94, Glu-95, and Tyr-148 each coordinate glycerol. Gly-252 lines the beta-D-fructose 1,6-bisphosphate pocket. Residue Asp-265 participates in sn-glycerol 3-phosphate binding. Glycerol-binding residues include Asp-265 and Gln-266. Residues Thr-287, Gly-332, Gly-433, and Asn-437 each coordinate ADP. ATP-binding residues include Thr-287, Gly-332, and Gly-433. Glu-501 contacts Zn(2+). Residues 532–552 (IFCSLPLGFFIVSSMVMLIGA) traverse the membrane as a helical segment.

The protein belongs to the FGGY kinase family.

It localises to the mitochondrion outer membrane. The protein resides in the nucleus. The protein localises to the cytoplasm. Its subcellular location is the cytosol. It catalyses the reaction glycerol + ATP = sn-glycerol 3-phosphate + ADP + H(+). Its pathway is polyol metabolism; glycerol degradation via glycerol kinase pathway; sn-glycerol 3-phosphate from glycerol: step 1/1. Functionally, kinase that plays a key role in glycerol metabolism, catalyzing its phosphorylation to produce sn-glycerol 3-phosphate. Sn-glycerol 3-phosphate is a crucial intermediate in various metabolic pathways, such as the synthesis of glycerolipids and triglycerides, glycogenesis, glycolysis and gluconeogenesis. The sequence is that of Glycerol kinase from Rattus norvegicus (Rat).